Consider the following 415-residue polypeptide: Histidine--tRNA ligase (415 aa).

Belongs to the class-II aminoacyl-tRNA synthetase family. Homodimer.

The protein resides in the cytoplasm. It catalyses the reaction tRNA(His) + L-histidine + ATP = L-histidyl-tRNA(His) + AMP + diphosphate + H(+). The protein is Histidine--tRNA ligase of Rhodospirillum rubrum (strain ATCC 11170 / ATH 1.1.1 / DSM 467 / LMG 4362 / NCIMB 8255 / S1).